The primary structure comprises 348 residues: Ketol-acid reductoisomerase (NADP(+)) (348 aa).

Positions 2–182 constitute a KARI N-terminal Rossmann domain; it reads AKTYYDHDAD…GCTRAGVLET (181 aa). NADP(+)-binding positions include 25 to 28, serine 51, serine 53, and 83 to 86; these read YGSQ and DTAQ. Residue histidine 108 is part of the active site. Glycine 134 lines the NADP(+) pocket. In terms of domain architecture, KARI C-terminal knotted spans 183-328; that stretch reads TFKEETETDL…EKLRAAMPFL (146 aa). 4 residues coordinate Mg(2+): aspartate 191, glutamate 195, glutamate 227, and glutamate 231. Serine 252 contributes to the substrate binding site.

The protein belongs to the ketol-acid reductoisomerase family. It depends on Mg(2+) as a cofactor.

It catalyses the reaction (2R)-2,3-dihydroxy-3-methylbutanoate + NADP(+) = (2S)-2-acetolactate + NADPH + H(+). It carries out the reaction (2R,3R)-2,3-dihydroxy-3-methylpentanoate + NADP(+) = (S)-2-ethyl-2-hydroxy-3-oxobutanoate + NADPH + H(+). The protein operates within amino-acid biosynthesis; L-isoleucine biosynthesis; L-isoleucine from 2-oxobutanoate: step 2/4. Its pathway is amino-acid biosynthesis; L-valine biosynthesis; L-valine from pyruvate: step 2/4. Involved in the biosynthesis of branched-chain amino acids (BCAA). Catalyzes an alkyl-migration followed by a ketol-acid reduction of (S)-2-acetolactate (S2AL) to yield (R)-2,3-dihydroxy-isovalerate. In the isomerase reaction, S2AL is rearranged via a Mg-dependent methyl migration to produce 3-hydroxy-3-methyl-2-ketobutyrate (HMKB). In the reductase reaction, this 2-ketoacid undergoes a metal-dependent reduction by NADPH to yield (R)-2,3-dihydroxy-isovalerate. This is Ketol-acid reductoisomerase (NADP(+)) from Acidobacterium capsulatum (strain ATCC 51196 / DSM 11244 / BCRC 80197 / JCM 7670 / NBRC 15755 / NCIMB 13165 / 161).